The following is a 207-amino-acid chain: Large ribosomal subunit protein uL4 (207 aa).

A disordered region spans residues 56–76 (EVRGGGRKPWRQKGTGRARAG). Residues 60 to 71 (GGRKPWRQKGTG) are compositionally biased toward basic residues.

The protein belongs to the universal ribosomal protein uL4 family. As to quaternary structure, part of the 50S ribosomal subunit.

One of the primary rRNA binding proteins, this protein initially binds near the 5'-end of the 23S rRNA. It is important during the early stages of 50S assembly. It makes multiple contacts with different domains of the 23S rRNA in the assembled 50S subunit and ribosome. Functionally, forms part of the polypeptide exit tunnel. The sequence is that of Large ribosomal subunit protein uL4 from Desulfitobacterium hafniense (strain Y51).